Reading from the N-terminus, the 536-residue chain is T-complex protein 1 subunit delta (536 aa).

Positions 1-21 (MAAVAAPMASKPRGSKAESFV) are disordered.

Belongs to the TCP-1 chaperonin family. As to quaternary structure, heterooligomeric complex of about 850 to 900 kDa that forms two stacked rings, 12 to 16 nm in diameter.

The protein localises to the cytoplasm. In terms of biological role, molecular chaperone; assists the folding of proteins upon ATP hydrolysis. Known to play a role, in vitro, in the folding of actin and tubulin. In Arabidopsis thaliana (Mouse-ear cress), this protein is T-complex protein 1 subunit delta.